Reading from the N-terminus, the 55-residue chain is MPQLNPSPWFFIMLTTWLTFSLIIQPKLLSFTPTNPPSNKISTTTKTTPWTWPWT.

The helical transmembrane segment at 7-24 threads the bilayer; that stretch reads SPWFFIMLTTWLTFSLII.

Belongs to the ATPase protein 8 family. As to quaternary structure, component of the ATP synthase complex composed at least of ATP5F1A/subunit alpha, ATP5F1B/subunit beta, ATP5MC1/subunit c (homooctomer), MT-ATP6/subunit a, MT-ATP8/subunit 8, ATP5ME/subunit e, ATP5MF/subunit f, ATP5MG/subunit g, ATP5MK/subunit k, ATP5MJ/subunit j, ATP5F1C/subunit gamma, ATP5F1D/subunit delta, ATP5F1E/subunit epsilon, ATP5PF/subunit F6, ATP5PB/subunit b, ATP5PD/subunit d, ATP5PO/subunit OSCP. ATP synthase complex consists of a soluble F(1) head domain (subunits alpha(3) and beta(3)) - the catalytic core - and a membrane F(0) domain - the membrane proton channel (subunits c, a, 8, e, f, g, k and j). These two domains are linked by a central stalk (subunits gamma, delta, and epsilon) rotating inside the F1 region and a stationary peripheral stalk (subunits F6, b, d, and OSCP).

It is found in the mitochondrion membrane. In terms of biological role, subunit 8, of the mitochondrial membrane ATP synthase complex (F(1)F(0) ATP synthase or Complex V) that produces ATP from ADP in the presence of a proton gradient across the membrane which is generated by electron transport complexes of the respiratory chain. ATP synthase complex consist of a soluble F(1) head domain - the catalytic core - and a membrane F(1) domain - the membrane proton channel. These two domains are linked by a central stalk rotating inside the F(1) region and a stationary peripheral stalk. During catalysis, ATP synthesis in the catalytic domain of F(1) is coupled via a rotary mechanism of the central stalk subunits to proton translocation. In vivo, can only synthesize ATP although its ATP hydrolase activity can be activated artificially in vitro. Part of the complex F(0) domain. This is ATP synthase F(0) complex subunit 8 from Columbina passerina (Common ground-dove).